Consider the following 265-residue polypeptide: Mlc titration factor A (265 aa).

Zn(2+) is bound by residues His111, His148, His152, and Glu211.

Belongs to the MtfA family. In terms of assembly, interacts with Mlc. It depends on Zn(2+) as a cofactor.

It localises to the cytoplasm. Functionally, involved in the modulation of the activity of the glucose-phosphotransferase system (glucose-PTS). Interacts with the transcriptional repressor Mlc, preventing its interaction with DNA and leading to the modulation of expression of genes regulated by Mlc, including ptsG, which encodes the PTS system glucose-specific EIICB component. Shows zinc-dependent metallopeptidase activity. In Enterobacter sp. (strain 638), this protein is Mlc titration factor A.